A 429-amino-acid chain; its full sequence is Serine hydroxymethyltransferase (429 aa).

(6S)-5,6,7,8-tetrahydrofolate is bound by residues L126 and 130–132; that span reads GHL. The residue at position 235 (K235) is an N6-(pyridoxal phosphate)lysine. 359 to 361 provides a ligand contact to (6S)-5,6,7,8-tetrahydrofolate; that stretch reads SPF.

This sequence belongs to the SHMT family. As to quaternary structure, homodimer. Requires pyridoxal 5'-phosphate as cofactor.

The protein resides in the cytoplasm. It catalyses the reaction (6R)-5,10-methylene-5,6,7,8-tetrahydrofolate + glycine + H2O = (6S)-5,6,7,8-tetrahydrofolate + L-serine. The protein operates within one-carbon metabolism; tetrahydrofolate interconversion. Its pathway is amino-acid biosynthesis; glycine biosynthesis; glycine from L-serine: step 1/1. Functionally, catalyzes the reversible interconversion of serine and glycine with tetrahydrofolate (THF) serving as the one-carbon carrier. This reaction serves as the major source of one-carbon groups required for the biosynthesis of purines, thymidylate, methionine, and other important biomolecules. Also exhibits THF-independent aldolase activity toward beta-hydroxyamino acids, producing glycine and aldehydes, via a retro-aldol mechanism. This chain is Serine hydroxymethyltransferase, found in Synechococcus sp. (strain CC9902).